The chain runs to 169 residues: Phosphopantetheine adenylyltransferase (169 aa).

Residue Thr14 coordinates substrate. Residues 14–15 and His22 contribute to the ATP site; that span reads TF. Residues Lys46, Leu78, and Arg92 each coordinate substrate. Residues 93 to 95, Glu103, and 128 to 134 each bind ATP; these read GLR and HSFISSS.

The protein belongs to the bacterial CoaD family. In terms of assembly, homohexamer. Mg(2+) serves as cofactor.

The protein resides in the cytoplasm. It carries out the reaction (R)-4'-phosphopantetheine + ATP + H(+) = 3'-dephospho-CoA + diphosphate. It participates in cofactor biosynthesis; coenzyme A biosynthesis; CoA from (R)-pantothenate: step 4/5. In terms of biological role, reversibly transfers an adenylyl group from ATP to 4'-phosphopantetheine, yielding dephospho-CoA (dPCoA) and pyrophosphate. This is Phosphopantetheine adenylyltransferase from Stenotrophomonas maltophilia (strain K279a).